The following is a 320-amino-acid chain: Acetyl-coenzyme A carboxylase carboxyl transferase subunit alpha (320 aa).

Residues 42–295 form the CoA carboxyltransferase C-terminal domain; sequence IEEKALAALT…GDAIAKSFAD (254 aa).

The protein belongs to the AccA family. Acetyl-CoA carboxylase is a heterohexamer composed of biotin carboxyl carrier protein (AccB), biotin carboxylase (AccC) and two subunits each of ACCase subunit alpha (AccA) and ACCase subunit beta (AccD).

The protein resides in the cytoplasm. The enzyme catalyses N(6)-carboxybiotinyl-L-lysyl-[protein] + acetyl-CoA = N(6)-biotinyl-L-lysyl-[protein] + malonyl-CoA. It functions in the pathway lipid metabolism; malonyl-CoA biosynthesis; malonyl-CoA from acetyl-CoA: step 1/1. Its function is as follows. Component of the acetyl coenzyme A carboxylase (ACC) complex. First, biotin carboxylase catalyzes the carboxylation of biotin on its carrier protein (BCCP) and then the CO(2) group is transferred by the carboxyltransferase to acetyl-CoA to form malonyl-CoA. The chain is Acetyl-coenzyme A carboxylase carboxyl transferase subunit alpha from Rhodopseudomonas palustris (strain BisA53).